Reading from the N-terminus, the 487-residue chain is L-tartrate/succinate antiporter (487 aa).

Residues 1–9 (MKPSTEWWR) lie on the Periplasmic side of the membrane. A helical membrane pass occupies residues 10 to 30 (YLAPLAVIAIIALLPVPAGLE). Over 31–32 (NH) the chain is Cytoplasmic. Transmembrane regions (helical) follow at residues 33-53 (TWLY…EPVP) and 54-74 (GAVV…WLLF). At 75-92 (SPEQLAQPGFKFTAKSLS) the chain is on the cytoplasmic side. Residues 93 to 113 (WAVSGFSNSVIWLIFAAFMFG) form a helical membrane-spanning segment. The Periplasmic portion of the chain corresponds to 114 to 136 (TGYEKTGLGRRIALILVKKMGHR). Residues 137–157 (TLFLGYAVMFSELILAPVTPS) form a helical membrane-spanning segment. The Cytoplasmic portion of the chain corresponds to 158–188 (NSARGAGIIYPIIRNLPPLYQSQPNDSSSRS). Residues 189–209 (IGSYIMWMGIVADCVTSAIFL) traverse the membrane as a helical segment. Residues 210 to 235 (TAMAPNLLLIGLMKSASHATLSWGDW) are Periplasmic-facing. Residues 236–256 (FLGMLPLSILLVLLVPWLAYV) form a helical membrane-spanning segment. The Cytoplasmic segment spans residues 257-291 (LYPPVLKSGDQVPRWAETELQAMGPLCSREKRMLG). The next 2 membrane-spanning stretches (helical) occupy residues 292-312 (LMVG…AAMV) and 313-333 (GYSV…DIVS). The Cytoplasmic segment spans residues 334 to 339 (NKAAWN). A helical transmembrane segment spans residues 340-360 (VFFWLASLITLATGLNNTGFI). Residues 361-369 (SWFGKLLAG) are Periplasmic-facing. The helical transmembrane segment at 370-390 (SLSGYSPTMVMVALIVVFYLL) threads the bilayer. The Cytoplasmic portion of the chain corresponds to 391–392 (RY). Residues 393–413 (FFASATAYTSALAPMMIAAAL) traverse the membrane as a helical segment. The Periplasmic portion of the chain corresponds to 414–417 (AMPE). The helical transmembrane segment at 418–438 (IPLPVFCLMVGAAIGLGSILT) threads the bilayer. The Cytoplasmic portion of the chain corresponds to 439-464 (PYATGPSPIYYGSGYLPTADYWRLGA). A helical membrane pass occupies residues 465 to 485 (IFGLIFLVLLVITGLLWMPVV). At 486 to 487 (LL) the chain is on the periplasmic side.

The protein belongs to the SLC13A/DASS transporter (TC 2.A.47) family. DIT1 subfamily.

The protein resides in the cell inner membrane. The catalysed reaction is (2R,3R)-tartrate(out) + succinate(in) = (2R,3R)-tartrate(in) + succinate(out). Catalyzes the uptake of tartrate in exchange for intracellular succinate. Essential for anaerobic L-tartrate fermentation. The protein is L-tartrate/succinate antiporter of Escherichia coli (strain K12).